Here is a 427-residue protein sequence, read N- to C-terminus: Succinate--CoA ligase [ADP-forming] subunit beta, mitochondrial (427 aa).

The transit peptide at 1–30 directs the protein to the mitochondrion; it reads MYSRKSLSLISKCGQLSRLNAQAALQARRH. One can recognise an ATP-grasp domain in the interval 39 to 284; it reads AQLLREYGIG…LSQEDPDEVK (246 aa). Residues Lys-76 and 83–85 each bind ATP; that span reads GRG. A Phosphoserine modification is found at Ser-102. Glu-144 is a binding site for ATP. Mg(2+) is bound by residues Asn-236 and Asp-253. Phosphoserine is present on residues Ser-263 and Ser-276. Residues Asn-304 and 361-363 each bind substrate; that span reads GIV.

This sequence belongs to the succinate/malate CoA ligase beta subunit family. As to quaternary structure, heterodimer of an alpha and a beta subunit. It depends on Mg(2+) as a cofactor.

Its subcellular location is the mitochondrion. It catalyses the reaction succinate + ATP + CoA = succinyl-CoA + ADP + phosphate. It participates in carbohydrate metabolism; tricarboxylic acid cycle; succinate from succinyl-CoA (ligase route): step 1/1. Its function is as follows. Succinyl-CoA synthetase functions in the citric acid cycle (TCA), coupling the hydrolysis of succinyl-CoA to the synthesis of ATP and thus represents the only step of substrate-level phosphorylation in the TCA. The beta subunit provides nucleotide specificity of the enzyme and binds the substrate succinate, while the binding sites for coenzyme A and phosphate are found in the alpha subunit. This Saccharomyces cerevisiae (strain ATCC 204508 / S288c) (Baker's yeast) protein is Succinate--CoA ligase [ADP-forming] subunit beta, mitochondrial.